The chain runs to 90 residues: uncharacterized protein (90 aa).

Transmembrane regions (helical) follow at residues 5–27 (FDIL…IIYI), 40–62 (IYLS…TFVA), and 67–89 (MSVV…YSIV).

Its subcellular location is the cell membrane. This is an uncharacterized protein from Archaeoglobus fulgidus (strain ATCC 49558 / DSM 4304 / JCM 9628 / NBRC 100126 / VC-16).